The chain runs to 253 residues: tRNA pseudouridine synthase A (253 aa).

D53 functions as the Nucleophile in the catalytic mechanism. Residue Y112 participates in substrate binding.

It belongs to the tRNA pseudouridine synthase TruA family. As to quaternary structure, homodimer.

The catalysed reaction is uridine(38/39/40) in tRNA = pseudouridine(38/39/40) in tRNA. In terms of biological role, formation of pseudouridine at positions 38, 39 and 40 in the anticodon stem and loop of transfer RNAs. The protein is tRNA pseudouridine synthase A of Lactococcus lactis subsp. lactis (strain IL1403) (Streptococcus lactis).